A 301-amino-acid chain; its full sequence is Hydroxymycolate synthase MmaA4 (301 aa).

Residues 42–43 (YS), 81–83 (GCG), 103–108 (TLSKNQ), 132–133 (WE), and Ile-145 each bind S-adenosyl-L-methionine. Residue Cys-278 is part of the active site.

This sequence belongs to the CFA/CMAS family. As to quaternary structure, monomer.

Its pathway is lipid metabolism; mycolic acid biosynthesis. In terms of biological role, involved in the biosynthesis of hydroxymycolate, a common precursor of oxygenated mycolic acids (methoxymycolate and ketomycolate). Probably transfers a methyl group from the S-adenosylmethionine (SAM) cofactor and, subsequently or simultaneously, a water molecule onto the double bound of ethylene substrates, leading to the formation of the hydroxylated product at the distal position. This chain is Hydroxymycolate synthase MmaA4 (cmaA), found in Mycobacterium bovis (strain ATCC BAA-935 / AF2122/97).